Reading from the N-terminus, the 120-residue chain is NAD(P)H-quinone oxidoreductase subunit 3 (120 aa).

The next 3 membrane-spanning stretches (helical) occupy residues 10-30, 64-84, and 89-109; these read FLGFLIIAAAVPILALVTNLI, MFALVFVIFDVETVFLYPWAV, and LGLLAFIEALIFITILVIALA.

This sequence belongs to the complex I subunit 3 family. As to quaternary structure, NDH-1 can be composed of about 15 different subunits; different subcomplexes with different compositions have been identified which probably have different functions.

It is found in the cellular thylakoid membrane. The enzyme catalyses a plastoquinone + NADH + (n+1) H(+)(in) = a plastoquinol + NAD(+) + n H(+)(out). It catalyses the reaction a plastoquinone + NADPH + (n+1) H(+)(in) = a plastoquinol + NADP(+) + n H(+)(out). NDH-1 shuttles electrons from an unknown electron donor, via FMN and iron-sulfur (Fe-S) centers, to quinones in the respiratory and/or the photosynthetic chain. The immediate electron acceptor for the enzyme in this species is believed to be plastoquinone. Couples the redox reaction to proton translocation, and thus conserves the redox energy in a proton gradient. Cyanobacterial NDH-1 also plays a role in inorganic carbon-concentration. This chain is NAD(P)H-quinone oxidoreductase subunit 3, found in Prochlorococcus marinus subsp. pastoris (strain CCMP1986 / NIES-2087 / MED4).